A 1147-amino-acid polypeptide reads, in one-letter code: Nucleolar protein 6 (1147 aa).

The interval 1–49 is disordered; it reads MQKKRSRAGAAEQEAASDDGEMSDSSDKMEVSQNKGKSGIKRAPEADDV. The span at 15–24 shows a compositional bias: acidic residues; sequence AASDDGEMSD.

Belongs to the NRAP family. In terms of assembly, part of the small subunit (SSU) processome, composed of more than 70 proteins and the RNA chaperone small nucleolar RNA (snoRNA) U3.

It localises to the nucleus. It is found in the nucleolus. The protein resides in the chromosome. Part of the small subunit (SSU) processome, first precursor of the small eukaryotic ribosomal subunit. During the assembly of the SSU processome in the nucleolus, many ribosome biogenesis factors, an RNA chaperone and ribosomal proteins associate with the nascent pre-rRNA and work in concert to generate RNA folding, modifications, rearrangements and cleavage as well as targeted degradation of pre-ribosomal RNA by the RNA exosome. In Xenopus laevis (African clawed frog), this protein is Nucleolar protein 6 (nol6).